A 365-amino-acid chain; its full sequence is UPF0283 membrane protein Avi_2471 (365 aa).

Residues 1–10 (MSKAPEDQRP) show a composition bias toward basic and acidic residues. Positions 1 to 47 (MSKAPEDQRPMPRRPAAFSLEEPSSSPARPPFAEAQEPQRRAPKSFD) are disordered. The next 2 membrane-spanning stretches (helical) occupy residues 83 to 103 (FGKLAGAAFGALASFAIGLWI) and 117 to 137 (LGYTALTLLGIGLLALTVVVI).

It belongs to the UPF0283 family.

It localises to the cell inner membrane. This Allorhizobium ampelinum (strain ATCC BAA-846 / DSM 112012 / S4) (Agrobacterium vitis (strain S4)) protein is UPF0283 membrane protein Avi_2471.